An 81-amino-acid polypeptide reads, in one-letter code: Cortexin-2 (81 aa).

The chain crosses the membrane as a helical span at residues 29-49; the sequence is TAFAFVGMLLVFLGLLIVRCF.

The protein belongs to the cortexin family.

It localises to the membrane. This Danio rerio (Zebrafish) protein is Cortexin-2 (ctxn2).